We begin with the raw amino-acid sequence, 425 residues long: Aspartic protease 2 (425 aa).

Residues 1 to 16 (MRSILVLVALIGCIAA) form the signal peptide. A Peptidase A1 domain is found at 72–421 (YLGEITIGTP…DIEKKRIGFA (350 aa)). Aspartate 90 is a catalytic residue. A disulfide bond links cysteine 103 and cysteine 145. N-linked (GlcNAc...) asparagine glycosylation is found at asparagine 163, asparagine 197, and asparagine 304. Aspartate 316 is a catalytic residue. Residues cysteine 351 and cysteine 382 are joined by a disulfide bond. N-linked (GlcNAc...) asparagine glycosylation is found at asparagine 354 and asparagine 365.

Belongs to the peptidase A1 family. In terms of processing, cleaved into a mature form. In terms of tissue distribution, expressed in intestine, amphidal glands and excretory gland (at protein level).

It localises to the secreted. With respect to regulation, inhibited by pepstatin A. Aspartic protease which cleaves several human serum proteins including hemoglobin, fibrinogen and albumin. Appears to cleave preferentially between P1 (Ala, Leu, Val, Phe and Gly) and P1' (Ala and Leu) residues. In Necator americanus (Human hookworm), this protein is Aspartic protease 2.